The sequence spans 145 residues: MADSDNTPTSRKDFETAIIAKAWKDPEYLRRLRSNPREVLQEELEALHPGAQLPDDLGISIHEEDENHVHLVMPRHPQNVSDQTLTDDDLDQAAGGTGIGVVVAVVAGAVANTGAGVNQVAGGNINVVGNINVNANVSVNMNQTT.

Residues 1–96 (MADSDNTPTS…DDDLDQAAGG (96 aa)) constitute a propeptide that is removed on maturation. Thr97 is modified (2-oxo-5,5-dimethylhexanoate). The residue at position 99 (Ile99) is a 3-methylisoleucine. A 3-methylvaline modification is found at Val101. At Val102 the chain carries 3-methyl-D-valine. Val103 bears the 3-methylvaline mark. Ala104 carries the D-alanine (Ala) modification. Residue Val105 is modified to 3-methylvaline. 2 positions are modified to 3-methyl-D-valine: Val106 and Val110. An N4-methyl-D-asparagine modification is found at Asn112. Residue Thr113 is modified to 3-hydroxyvaline (Thr). Val117 carries the 3-methylvaline modification. Residue Asn118 is modified to N4-methyl-D-asparagine. Gln119 bears the (3S)-3-methylglutamine mark. Val120 carries the 3-hydroxy-D-valine modification. Asn124 carries the N4-methyl-D-asparagine modification. Asn126 is subject to (3R)-N4-methyl-3-hydroxy-D-asparagine. At Val127 the chain carries 3-methylvaline. Val128 is subject to 3-hydroxy-D-valine. An N4-methyl-D-asparagine mark is found at Asn130 and Asn132. Asn134 is modified ((3R)-N4-methyl-3-hydroxy-D-asparagine). The residue at position 136 (Asn136) is an N4-methyl-D-asparagine. Position 138 is a D-serine (Ser) (Ser138). Asn140 is subject to D-asparagine. At Met141 the chain carries 3,3-dimethylmethionine. D-asparagine is present on Asn142. Thr144 is subject to D-threonine.

Post-translationally, epimerization of most, and perhaps all, L- to D-amino acids is catalyzed by PoyD, when PoyA and PoyD are coexpressed in E.coli. In terms of processing, N-methylations are catalyzed by PoyE, when PoyA and PoyE are coexpressed in E.coli. To obtain 2-oxo-5,5-dimethylhexanoate, Thr-97 is firstly dehydrated by PoyF. The second step possibly corresponds to methylation by PoyB/C, and the third step may be a cleavage by PoyH/J.

In terms of biological role, antimicrobial peptide active against Gram-positive bacteria (MIC=4-&gt;125 ug/ml). May act by forming transmembrane ion channels, since the peptide rapidly depolarizes the bacterial cytoplasmic membrane, simultaneously decreasing the membrane potential and intracellular potassium contents. This is Polytheonamide B from Bacterium symbiont subsp. Theonella swinhoei (strain pTSMAC1).